We begin with the raw amino-acid sequence, 237 residues long: Sugar fermentation stimulation protein homolog (237 aa).

The protein belongs to the SfsA family.

This is Sugar fermentation stimulation protein homolog from Pseudomonas savastanoi pv. phaseolicola (strain 1448A / Race 6) (Pseudomonas syringae pv. phaseolicola (strain 1448A / Race 6)).